Reading from the N-terminus, the 213-residue chain is Redox-sensing transcriptional repressor Rex (213 aa).

The segment at residues 17-56 (LYYRIFKRFYADQVEKASSKQIADAMGIDSATVRRDFSYF) is a DNA-binding region (H-T-H motif). Residue 91–96 (GCGNIG) coordinates NAD(+).

It belongs to the transcriptional regulatory Rex family. As to quaternary structure, homodimer.

It localises to the cytoplasm. Its function is as follows. Modulates transcription in response to changes in cellular NADH/NAD(+) redox state. The protein is Redox-sensing transcriptional repressor Rex of Streptococcus uberis (strain ATCC BAA-854 / 0140J).